The chain runs to 259 residues: MFTLADISFRSRLLMGTGKFTTKEIMLQAITAAGSELVTLAMRRVDIKGGNDAILPTLRTAGVKLLPNTSGAKDADEALFVARLAREAIGTNWIKLEIHPDMQYLLPDPVETLKAASKLVKDGFVVLPYCSADPVLCRRLEEVGCAAVMPLGSPIGSNQGLKTKDFLQIIIEQTQVPVVVDAGIGAPSQALEALEMGADAVLVNTAIAVALDPVAMARAFSLALAAGDLAKSAGLAERRKYASATSPLTQFLSHYEVCK.

Residue Lys-95 is the Schiff-base intermediate with DXP of the active site. 1-deoxy-D-xylulose 5-phosphate contacts are provided by residues Gly-156, 182-183 (AG), and 204-205 (NT).

Belongs to the ThiG family. Homotetramer. Forms heterodimers with either ThiH or ThiS.

The protein resides in the cytoplasm. It carries out the reaction [ThiS sulfur-carrier protein]-C-terminal-Gly-aminoethanethioate + 2-iminoacetate + 1-deoxy-D-xylulose 5-phosphate = [ThiS sulfur-carrier protein]-C-terminal Gly-Gly + 2-[(2R,5Z)-2-carboxy-4-methylthiazol-5(2H)-ylidene]ethyl phosphate + 2 H2O + H(+). The protein operates within cofactor biosynthesis; thiamine diphosphate biosynthesis. Functionally, catalyzes the rearrangement of 1-deoxy-D-xylulose 5-phosphate (DXP) to produce the thiazole phosphate moiety of thiamine. Sulfur is provided by the thiocarboxylate moiety of the carrier protein ThiS. In vitro, sulfur can be provided by H(2)S. This chain is Thiazole synthase, found in Baumannia cicadellinicola subsp. Homalodisca coagulata.